The following is a 681-amino-acid chain: UvrABC system protein B (681 aa).

One can recognise a Helicase ATP-binding domain in the interval 32 to 419 (ARLSRGERDV…GGEYVEQVIR (388 aa)). 45–52 (GATGTGKS) lines the ATP pocket. The short motif at 98–121 (YYDYYQPEAYIAQTDTYIEKDSSI) is the Beta-hairpin element. Residues 436 to 602 (QIDDLIHEIK…PLRKKIADIL (167 aa)) form the Helicase C-terminal domain. Polar residues predominate over residues 607 to 616 (ESKAESTAPS). Positions 607–626 (ESKAESTAPSSDAVVVSKTN) are disordered. Positions 636–671 (RSLIDDLTTQMGTAARELKFELAGRLRDEIAELKKE) constitute a UVR domain.

This sequence belongs to the UvrB family. Forms a heterotetramer with UvrA during the search for lesions. Interacts with UvrC in an incision complex.

It is found in the cytoplasm. The UvrABC repair system catalyzes the recognition and processing of DNA lesions. A damage recognition complex composed of 2 UvrA and 2 UvrB subunits scans DNA for abnormalities. Upon binding of the UvrA(2)B(2) complex to a putative damaged site, the DNA wraps around one UvrB monomer. DNA wrap is dependent on ATP binding by UvrB and probably causes local melting of the DNA helix, facilitating insertion of UvrB beta-hairpin between the DNA strands. Then UvrB probes one DNA strand for the presence of a lesion. If a lesion is found the UvrA subunits dissociate and the UvrB-DNA preincision complex is formed. This complex is subsequently bound by UvrC and the second UvrB is released. If no lesion is found, the DNA wraps around the other UvrB subunit that will check the other stand for damage. In Corynebacterium diphtheriae (strain ATCC 700971 / NCTC 13129 / Biotype gravis), this protein is UvrABC system protein B.